A 406-amino-acid chain; its full sequence is Probable 2,3-bisphosphoglycerate-independent phosphoglycerate mutase (406 aa).

This sequence belongs to the BPG-independent phosphoglycerate mutase family. A-PGAM subfamily.

The catalysed reaction is (2R)-2-phosphoglycerate = (2R)-3-phosphoglycerate. Its pathway is carbohydrate degradation; glycolysis; pyruvate from D-glyceraldehyde 3-phosphate: step 3/5. Catalyzes the interconversion of 2-phosphoglycerate and 3-phosphoglycerate. This chain is Probable 2,3-bisphosphoglycerate-independent phosphoglycerate mutase, found in Thermus thermophilus (strain ATCC BAA-163 / DSM 7039 / HB27).